A 173-amino-acid polypeptide reads, in one-letter code: Transcription factor S-II-related protein (173 aa).

In terms of domain architecture, TFIIS central spans Ile-9–Val-129. Residues Glu-130 to Lys-170 form a TFIIS-type zinc finger. Zn(2+) contacts are provided by Cys-134, Cys-137, Cys-162, and Cys-165.

This sequence belongs to the TFS-II family.

The polypeptide is Transcription factor S-II-related protein (Acanthamoeba polyphaga mimivirus (APMV)).